We begin with the raw amino-acid sequence, 176 residues long: Photosystem I assembly protein Ycf4 (176 aa).

The next 2 membrane-spanning stretches (helical) occupy residues 22–42 (FVWAFILFFGSLEFILVGTAS) and 48–68 (LIAFFPQGMVMIFYGISGLFI).

This sequence belongs to the Ycf4 family.

Its subcellular location is the plastid thylakoid membrane. Its function is as follows. Seems to be required for the assembly of the photosystem I complex. The chain is Photosystem I assembly protein Ycf4 from Cuscuta gronovii (Common dodder).